The sequence spans 473 residues: Pentatricopeptide repeat-containing protein At3g60050 (473 aa).

PPR repeat units lie at residues 148 to 182 (TVNS…GFPT), 183 to 217 (TART…NYRP), 218 to 252 (FKHS…GFSP), 253 to 287 (DVLT…GFSP), 288 to 322 (DSYT…GIDP), 323 to 357 (SVLH…GCRP), 358 to 392 (DVVC…GQLP), 393 to 427 (NVFT…GCNP), and 428 to 462 (NFVV…GHYV).

Belongs to the PPR family. P subfamily.

This is Pentatricopeptide repeat-containing protein At3g60050 from Arabidopsis thaliana (Mouse-ear cress).